The chain runs to 571 residues: Urease subunit alpha (571 aa).

In terms of domain architecture, Urease spans 133-571; that stretch reads GGIDTHVHFI…LPLTQRYFLF (439 aa). 3 residues coordinate Ni(2+): His-138, His-140, and Lys-221. Residue Lys-221 is modified to N6-carboxylysine. His-223 serves as a coordination point for substrate. His-250 and His-276 together coordinate Ni(2+). The Proton donor role is filled by His-324. Asp-364 provides a ligand contact to Ni(2+).

It belongs to the metallo-dependent hydrolases superfamily. Urease alpha subunit family. In terms of assembly, heterotrimer of UreA (gamma), UreB (beta) and UreC (alpha) subunits. Three heterotrimers associate to form the active enzyme. Ni cation serves as cofactor. Carboxylation allows a single lysine to coordinate two nickel ions.

It localises to the cytoplasm. The catalysed reaction is urea + 2 H2O + H(+) = hydrogencarbonate + 2 NH4(+). It functions in the pathway nitrogen metabolism; urea degradation; CO(2) and NH(3) from urea (urease route): step 1/1. The protein is Urease subunit alpha of Staphylococcus epidermidis (strain ATCC 35984 / DSM 28319 / BCRC 17069 / CCUG 31568 / BM 3577 / RP62A).